Consider the following 184-residue polypeptide: Endoribonuclease YbeY (184 aa).

Zn(2+)-binding residues include His-118, His-122, and His-128. The interval 156-184 (YHQDRQSQKDQRLLDKSRYFDELNHGDTP) is disordered. Positions 157–184 (HQDRQSQKDQRLLDKSRYFDELNHGDTP) are enriched in basic and acidic residues.

Belongs to the endoribonuclease YbeY family. Requires Zn(2+) as cofactor.

It localises to the cytoplasm. In terms of biological role, single strand-specific metallo-endoribonuclease involved in late-stage 70S ribosome quality control and in maturation of the 3' terminus of the 16S rRNA. The protein is Endoribonuclease YbeY of Mycolicibacterium vanbaalenii (strain DSM 7251 / JCM 13017 / BCRC 16820 / KCTC 9966 / NRRL B-24157 / PYR-1) (Mycobacterium vanbaalenii).